Reading from the N-terminus, the 4377-residue chain is Ankyrin-3 (4377 aa).

The tract at residues 1–44 (MAHAASQLKKNRDLEINAEEEPEKKRKHRKRSRDRKKKSDANAS) is disordered. The segment covering 25 to 38 (KRKHRKRSRDRKKK) has biased composition (basic residues). Ser-39 carries the phosphoserine modification. ANK repeat units follow at residues 73–102 (NGLN…NVDA), 106–135 (KGNT…NVNA), 139–168 (NGFT…SQSL), 172–201 (DGFT…KGKV), 203–230 (LPAL…NADV), 234–263 (SGFT…AVDF), 267–296 (NDIT…KIDA), 300–329 (DGLT…PILS), 333–362 (NGLS…PVDD), 366–395 (DYLT…NPNA), 399–428 (NGFT…SIQA), 432–461 (SGLT…SPNT), 465–494 (RGET…QVEA), 498–527 (DDQT…SPNA), 531–560 (SGYT…SLSI), 564–593 (KGFT…SPDA), 597–626 (SGLT…SPHA), 630–659 (NGYT…DANA), 663–692 (QGIA…NVNL), 696–725 (SGLT…HVDA), 729–758 (MGYT…KVNA), 762–791 (NGYT…SPNE), and 795–825 (NGNT…TMTT). Thr-468 carries the phosphoserine modification. The residue at position 623 (Ser-623) is a Phosphoserine. Phosphoserine occurs at positions 765 and 791. Ser-847, Ser-861, Ser-867, Ser-913, Ser-916, Ser-922, Ser-957, Ser-959, and Ser-1113 each carry phosphoserine. ZU5 domains are found at residues 984–1139 (FLVS…VVSR) and 1141–1288 (KQES…LADC). The segment at 1273-1407 (VSFTTNVSAR…SIKIRDTSQE (135 aa)) is UPA domain. A phosphoserine mark is found at Ser-1445, Ser-1459, and Ser-1470. A compositionally biased stretch (low complexity) spans 1519 to 1539 (SGFTSLSSSSSNTPSASPLKS). The segment at 1519–1540 (SGFTSLSSSSSNTPSASPLKSI) is disordered. A phosphoserine mark is found at Ser-1622, Ser-1625, Ser-1632, Ile-1651, Leu-1658, Ser-1984, Ser-2111, Ser-2123, and Ser-2126. 15 disordered regions span residues 1968–1987 (VDNK…SPED), 2107–2159 (TILE…VPIP), 2176–2245 (YDPS…EETH), 2299–2322 (AVSP…DNQM), 2383–2433 (FPCS…ISDD), 2474–2508 (DVSH…KIAT), 2588–2751 (LTEV…VKKI), 2795–2824 (QSNE…MPDS), 3036–3067 (PPLE…DVFD), 3131–3272 (TFYT…KKHH), 3298–3516 (PVIR…SVFP), 3538–3607 (KGLD…HEGK), 3635–3718 (GEHT…DPKL), 3868–3897 (KATS…QSEK), and 4019–4090 (KKMQ…CERT). Residues 1977 to 1986 (PKSDKGHSPE) show a composition bias toward basic and acidic residues. Over residues 2115–2136 (FSQHDQDKSPLSDSGFETRSEK) the composition is skewed to basic and acidic residues. Polar residues predominate over residues 2137–2146 (TPSAPQSAES). The segment covering 2299-2308 (AVSPDVHKSA) has biased composition (basic and acidic residues). A compositionally biased stretch (acidic residues) spans 2390–2399 (GQQEEEELTA). Over residues 2407–2417 (LESSRVNTPVS) the composition is skewed to polar residues. 2 stretches are compositionally biased toward basic and acidic residues: residues 2497-2508 (GSDKRSREKIAT) and 2588-2612 (LTEV…PEKK). Low complexity predominate over residues 2622-2631 (SSQSPTSSSP). Positions 2706–2716 (SGFQLKQSKLS) are enriched in polar residues. Residues 2720 to 2742 (LKFEQGTHAKSKDMSQEDRKSDG) show a composition bias toward basic and acidic residues. Polar residues predominate over residues 2796-2807 (SNEIVVNDSGSD). Composition is skewed to polar residues over residues 3154-3186 (EQVS…SKTP) and 3214-3224 (KSTSLKQTTVE). Basic and acidic residues-rich tracts occupy residues 3227–3242 (AVER…DSNQ) and 3335–3361 (KLKE…KELE). Positions 3377–3402 (SPQNEIAQNGNNDQSITECSIATTAE) are enriched in polar residues. The span at 3409-3428 (ATEIDSLDGYDLQDEDDGLT) shows a compositional bias: acidic residues. 2 stretches are compositionally biased toward basic and acidic residues: residues 3465-3481 (EVIE…DKPP) and 3549-3575 (RGDD…EDRS). Residues 3576–3598 (PATTPDTTPARTPTDESTPTSEP) are compositionally biased toward low complexity. Residues 3637-3651 (HTSEGKSGDQGEGDK) show a composition bias toward basic and acidic residues. Composition is skewed to polar residues over residues 3654 to 3669 (VTAT…TVET), 3676 to 3713 (ETPT…NTSK), 3880 to 3897 (HMSN…QSEK), and 4033 to 4052 (SRNT…VTTK). The span at 4053–4076 (SARDKKTEAAPLKSKSEKAGSEKR) shows a compositional bias: basic and acidic residues. One can recognise a Death domain in the interval 4090–4174 (TDIRMAIVAD…DIVTLLEGPI (85 aa)). Phosphoserine occurs at positions 4211 and 4229. Disordered regions lie at residues 4251–4298 (NGSH…EPAS) and 4323–4377 (PVSM…KSHS). A compositionally biased stretch (polar residues) spans 4268–4277 (PESQNDVGKQ). Ser-4290 and Ser-4298 each carry phosphoserine. Over residues 4337-4347 (GKPRLSLHEEE) the composition is skewed to basic and acidic residues. Ser-4350 bears the Phosphoserine mark. Residues 4362–4377 (VKTKKEIRHVEKKSHS) are compositionally biased toward basic residues.

As to quaternary structure, directly interacts with DMD and betaDAG1. This interaction does not interfere with binding between DMD and betaDAG1. It is also required for DMD and betaDAG1 retention at costameres. Interacts (via N-terminal ANK repeats) with SCHIP1 isoform 5 (via C-terminus); this interaction is required for the localization at axon initial segments (AISs) and nodes of Ranvier (NRs). May be a constituent of a NFASC/NRCAM/ankyrin G complex. Interacts with RHBG. Interacts with PLEC and FLNC. Interacts with KCNA1; this inhibits channel activity. Interacts (via ANK repeats) with IQCJ-SCHIP1; required for IQCJ-SCHIP1 localization at axon initial segments (AIS) and nodes of Ranvier. Interacts with SCHIP1. Interacts with SCN5A. Interacts with PKP2 and GJA1/CX43. In terms of tissue distribution, expressed in brain, neurons, muscles and other tissues.

The protein localises to the cytoplasm. The protein resides in the cytoskeleton. It is found in the cell projection. Its subcellular location is the axon. It localises to the cell membrane. The protein localises to the sarcolemma. The protein resides in the postsynaptic cell membrane. It is found in the lysosome. Its subcellular location is the T-tubule. It localises to the golgi apparatus. Functionally, membrane-cytoskeleton linker. May participate in the maintenance/targeting of ion channels and cell adhesion molecules at the nodes of Ranvier and axonal initial segments. In skeletal muscle, required for costamere localization of DMD and betaDAG1. Regulates KCNA1 channel activity in function of dietary Mg(2+) levels, and thereby contributes to the regulation of renal Mg(2+) reabsorption. Required for intracellular adhesion and junctional conductance in myocytes, potentially via stabilization of GJA1/CX43 protein abundance and promotion of PKP2, GJA1/CX43, and SCN5A/Nav1.5 localization to cell-cell junctions. In terms of biological role, may be part of a Golgi-specific membrane cytoskeleton in association with beta-spectrin. The protein is Ankyrin-3 of Homo sapiens (Human).